The following is a 179-amino-acid chain: Large ribosomal subunit protein uL5 (179 aa).

Belongs to the universal ribosomal protein uL5 family. As to quaternary structure, part of the 50S ribosomal subunit; part of the 5S rRNA/L5/L18/L25 subcomplex. Contacts the 5S rRNA and the P site tRNA. Forms a bridge to the 30S subunit in the 70S ribosome.

This is one of the proteins that bind and probably mediate the attachment of the 5S RNA into the large ribosomal subunit, where it forms part of the central protuberance. In the 70S ribosome it contacts protein S13 of the 30S subunit (bridge B1b), connecting the 2 subunits; this bridge is implicated in subunit movement. Contacts the P site tRNA; the 5S rRNA and some of its associated proteins might help stabilize positioning of ribosome-bound tRNAs. The chain is Large ribosomal subunit protein uL5 from Prochlorococcus marinus (strain MIT 9301).